Reading from the N-terminus, the 339-residue chain is NADH-quinone oxidoreductase subunit H (339 aa).

The next 9 helical transmembrane spans lie at 9–29, 50–70, 82–102, 115–135, 161–181, 187–207, 235–255, 275–295, and 311–331; these read IFPL…LILC, PNVV…KLLF, ILFI…WAVI, VGVL…IIAG, MGLV…SGII, MPWW…ISVL, MGFA…SAMT, IPGF…FLWI, and GWKV…SVLV.

It belongs to the complex I subunit 1 family. As to quaternary structure, NDH-1 is composed of 14 different subunits. Subunits NuoA, H, J, K, L, M, N constitute the membrane sector of the complex.

Its subcellular location is the cell inner membrane. It carries out the reaction a quinone + NADH + 5 H(+)(in) = a quinol + NAD(+) + 4 H(+)(out). NDH-1 shuttles electrons from NADH, via FMN and iron-sulfur (Fe-S) centers, to quinones in the respiratory chain. The immediate electron acceptor for the enzyme in this species is believed to be ubiquinone. Couples the redox reaction to proton translocation (for every two electrons transferred, four hydrogen ions are translocated across the cytoplasmic membrane), and thus conserves the redox energy in a proton gradient. This subunit may bind ubiquinone. The polypeptide is NADH-quinone oxidoreductase subunit H (Rickettsia conorii (strain ATCC VR-613 / Malish 7)).